A 1133-amino-acid chain; its full sequence is SH3 and PX domain-containing protein 2A (1133 aa).

A PX domain is found at 4 to 128 (YCVQDATVVD…RFFEARPEDV (125 aa)). One can recognise an SH3 1 domain in the interval 166-225 (MILEQYVVVSNYKKQENSELSLQAGEVVDVIEKNESGWWFVSTSEEQGWVPATYLEAQNG). T256 is modified (phosphothreonine). The SH3 2 domain occupies 266–325 (SREEKYVTVQPYTSQSKDEIGFEKGVTVEVIRKNLEGWWYIRYLGKEGWAPASYLKKAKD). 2 positions are modified to phosphoserine: S406 and S421. Disordered stretches follow at residues 415–446 (QRAQ…PPEP), 505–840 (RKKP…EWEG), 899–924 (NEQP…GKSD), and 941–964 (QSKK…SGTP). The 60-residue stretch at 448 to 507 (SVEVEYYTIAEFQSCISDGISFRGGQKAEVIDKNSGGWWYVQIGEKEGWAPASYIDKRKK) folds into the SH3 3 domain. Residues 546-555 (DSPRKLKYEE) show a composition bias toward basic and acidic residues. Phosphoserine is present on residues S547 and S567. Acidic residues predominate over residues 567 to 576 (SEPELSEEPV). Residues 577 to 586 (EDRASGERRP) show a composition bias toward basic and acidic residues. S593 bears the Phosphoserine mark. Positions 608 to 620 (SSEDVALEEETIY) are enriched in acidic residues. Composition is skewed to low complexity over residues 634–652 (SARG…SLSL), 658–670 (PKSG…SLLK), and 686–715 (SSAS…SKTS). S644 is subject to Phosphoserine. A Phosphothreonine modification is found at T731. A phosphoserine mark is found at S767, S769, and S819. Phosphothreonine is present on T829. An SH3 4 domain is found at 840–899 (GPATSYMTCSAYQKVQDSEISFPAGVEVQVLEKQESGWWYVRFGELEGWAPSHYLVLDEN). A coiled-coil region spans residues 917 to 946 (RQNEGKSDSLEKIERRVQALNTVNQSKKAT). Phosphoserine is present on residues S1002, S1016, S1017, and S1038. The tract at residues 1029–1059 (KGRLAERAASQGSDSPLLPAQRNSIPVSPVR) is disordered. The 62-residue stretch at 1072–1133 (NLKDVYVSIA…VPSNYLEKKN (62 aa)) folds into the SH3 5 domain.

This sequence belongs to the SH3PXD2 family. Interacts (via N-terminus) with CYBA. Interacts with ADAM12, ADAM15 and ADAM19. Interacts with NOXO1. Interacts (via SH3 domains) with NOXA1. Interacts with FASLG. Interacts (via PX domain) with RAB40B (GTP-bound); interaction promotes invadopodia-mediated extracellular matrix degradation. Tyrosine phosphorylated by SRC. Phosphorylation plays a regulatory role in the protein localization. The intramolecular interaction of the PX domain with the third SH3 domain maintains the protein in the cytoplasm and phosphorylation disrupts this interaction, resulting in the redistribution of the protein from cytoplasm to the perimembrane region. Phosphorylated on serine upon DNA damage, probably by ATM or ATR. In terms of tissue distribution, found in several cancer cell lines, particularly invasive breast carcinomas and melanomas.

It localises to the cytoplasm. It is found in the cell projection. Its subcellular location is the podosome. Adapter protein involved in invadopodia and podosome formation, extracellular matrix degradation and invasiveness of some cancer cells. Binds matrix metalloproteinases (ADAMs), NADPH oxidases (NOXs) and phosphoinositides. Acts as an organizer protein that allows NOX1- or NOX3-dependent reactive oxygen species (ROS) generation and ROS localization. In association with ADAM12, mediates the neurotoxic effect of amyloid-beta peptide. This is SH3 and PX domain-containing protein 2A from Homo sapiens (Human).